Consider the following 435-residue polypeptide: Tektin-4 (435 aa).

Positions 60–69 are enriched in basic and acidic residues; that stretch reads DQSERQRHES. Positions 60-96 are disordered; sequence DQSERQRHESQQLATETQALAQRTQQDSTRTVGERLQ. The span at 70-85 shows a compositional bias: low complexity; sequence QQLATETQALAQRTQQ. Coiled coils occupy residues 102-180, 310-336, and 363-411; these read KSEL…LLKR, LHKTLREITDQEHNVAALKQAIKDKEA, and FRLL…TNSL.

It belongs to the tektin family. As to quaternary structure, microtubule inner protein component of sperm flagellar doublet microtubules. Post-translationally, ubiquitinated, leading to its degradation. Deubiquitinated by USP16, promoting its stability. Strongly expressed in spermatozoa. Also detected at low levels in pancreas. Expressed in airway epithelial cells.

The protein localises to the cytoplasm. It localises to the cytoskeleton. Its subcellular location is the cilium axoneme. The protein resides in the flagellum axoneme. In terms of biological role, microtubule inner protein (MIP) part of the dynein-decorated doublet microtubules (DMTs) in cilia and flagellar axoneme. Forms filamentous polymers in the walls of ciliary and flagellar microtubules. Contributes to normal sperm motility. This is Tektin-4 from Homo sapiens (Human).